The primary structure comprises 439 residues: Cobyrinate a,c-diamide synthase (439 aa).

A GATase cobBQ-type domain is found at 238–431; sequence KIAVAYDKAF…AHVNFLGNIE (194 aa). Catalysis depends on Cys-320, which acts as the Nucleophile.

Belongs to the CobB/CbiA family. Mg(2+) is required as a cofactor.

It catalyses the reaction cob(II)yrinate + 2 L-glutamine + 2 ATP + 2 H2O = cob(II)yrinate a,c diamide + 2 L-glutamate + 2 ADP + 2 phosphate + 2 H(+). It functions in the pathway cofactor biosynthesis; adenosylcobalamin biosynthesis; cob(II)yrinate a,c-diamide from sirohydrochlorin (anaerobic route): step 10/10. Functionally, catalyzes the ATP-dependent amidation of the two carboxylate groups at positions a and c of cobyrinate, using either L-glutamine or ammonia as the nitrogen source. This chain is Cobyrinate a,c-diamide synthase, found in Clostridium tetani (strain Massachusetts / E88).